The chain runs to 962 residues: UBP9-binding protein bun107 (962 aa).

WD repeat units follow at residues Asp25–Ser69, Ala77–Leu116, Glu121–Arg162, Val172–Asp211, Gly214–Ser253, and Lys302–Val339. The span at Ser568–Pro578 shows a compositional bias: low complexity. Disordered stretches follow at residues Ser568–Ser615 and Arg702–Leu758. The span at Arg707–Lys723 shows a compositional bias: polar residues. A Phosphoserine modification is found at Ser717. A compositionally biased stretch (low complexity) spans Thr724–Thr738.

In terms of assembly, interacts with ubp9 and bun62.

The protein localises to the cytoplasm. It is found in the cell tip. Functionally, required for the ubp9 recruitment to septa and cell tips but also for its enzymatic activity at these specific locations. The polypeptide is UBP9-binding protein bun107 (bun107) (Schizosaccharomyces pombe (strain 972 / ATCC 24843) (Fission yeast)).